The primary structure comprises 271 residues: 3-methyl-2-oxobutanoate hydroxymethyltransferase (271 aa).

Positions 53 and 92 each coordinate Mg(2+). 3-methyl-2-oxobutanoate-binding positions include 53 to 54 (DS), Asp92, and Lys120. Mg(2+) is bound at residue Glu122. Glu189 functions as the Proton acceptor in the catalytic mechanism.

The protein belongs to the PanB family. Homodecamer; pentamer of dimers. Requires Mg(2+) as cofactor.

It is found in the cytoplasm. The catalysed reaction is 3-methyl-2-oxobutanoate + (6R)-5,10-methylene-5,6,7,8-tetrahydrofolate + H2O = 2-dehydropantoate + (6S)-5,6,7,8-tetrahydrofolate. Its pathway is cofactor biosynthesis; (R)-pantothenate biosynthesis; (R)-pantoate from 3-methyl-2-oxobutanoate: step 1/2. In terms of biological role, catalyzes the reversible reaction in which hydroxymethyl group from 5,10-methylenetetrahydrofolate is transferred onto alpha-ketoisovalerate to form ketopantoate. The polypeptide is 3-methyl-2-oxobutanoate hydroxymethyltransferase (Burkholderia multivorans (strain ATCC 17616 / 249)).